Consider the following 78-residue polypeptide: RTX-VII (78 aa).

An N-terminal signal peptide occupies residues 1–22 (MKTIVYLIVSILLLSSTVLVLA). Residues 23-40 (EGNAASHELQEYPIEEQR) constitute a propeptide that is removed on maturation. 4 cysteine pairs are disulfide-bonded: Cys42–Cys58, Cys47–Cys63, Cys57–Cys73, and Cys65–Cys71. Position 76 is an arginine amide (Arg76).

In terms of tissue distribution, expressed by the venom gland.

Its subcellular location is the secreted. Functionally, agonist of rat Nav1.3/SCN3A. This toxin increases the peak current amplitude, and potently inhibits the fast inactivation of the channel (EC(50)=120 nM). The inhibition of fast inactivation is voltage-independent (depolarizing voltages ranging from 220 mV to 130 mV). The toxin might bind to the domain IV of the Nav1.3 channel, while domain II might not participate in interacting with the toxin but could determine the efficacy of RTX-VII. In vivo, when intracerebroventricularly injected into mice, the toxin causes involuntary body twitching (seizure-like symptoms). In Macrothele raveni (Funnel-web spider), this protein is RTX-VII.